The following is a 387-amino-acid chain: Succinate--CoA ligase [ADP-forming] subunit beta (387 aa).

The region spanning 9–244 is the ATP-grasp domain; sequence KQLFAEYGIP…KTQEDETEVL (236 aa). Residues K46, 53 to 55, G102, and E107 contribute to the ATP site; that span reads GRG. Residues N199 and D213 each contribute to the Mg(2+) site. Substrate-binding positions include N264 and 321 to 323; that span reads GIV.

The protein belongs to the succinate/malate CoA ligase beta subunit family. Heterotetramer of two alpha and two beta subunits. The cofactor is Mg(2+).

The enzyme catalyses succinate + ATP + CoA = succinyl-CoA + ADP + phosphate. It catalyses the reaction GTP + succinate + CoA = succinyl-CoA + GDP + phosphate. The protein operates within carbohydrate metabolism; tricarboxylic acid cycle; succinate from succinyl-CoA (ligase route): step 1/1. Succinyl-CoA synthetase functions in the citric acid cycle (TCA), coupling the hydrolysis of succinyl-CoA to the synthesis of either ATP or GTP and thus represents the only step of substrate-level phosphorylation in the TCA. The beta subunit provides nucleotide specificity of the enzyme and binds the substrate succinate, while the binding sites for coenzyme A and phosphate are found in the alpha subunit. This Xylella fastidiosa (strain M23) protein is Succinate--CoA ligase [ADP-forming] subunit beta.